Reading from the N-terminus, the 275-residue chain is Chemotaxis protein methyltransferase Cher2 (275 aa).

In terms of domain architecture, CheR-type methyltransferase spans 1-275 (MSTGNLDFEQ…CSPGIIYQAK (275 aa)). Residues N73, T75, R79, E116, D145, 201–202 (NL), and 218–219 (RN) contribute to the S-adenosyl-L-methionine site.

In terms of assembly, monomer.

The enzyme catalyses L-glutamyl-[protein] + S-adenosyl-L-methionine = [protein]-L-glutamate 5-O-methyl ester + S-adenosyl-L-homocysteine. Methylation of the membrane-bound methyl-accepting chemotaxis proteins (MCP) to form gamma-glutamyl methyl ester residues in MCP. Methylates the McpS chemotaxis receptor. In Pseudomonas putida (strain ATCC 47054 / DSM 6125 / CFBP 8728 / NCIMB 11950 / KT2440), this protein is Chemotaxis protein methyltransferase Cher2 (cheR2).